Here is a 217-residue protein sequence, read N- to C-terminus: Pyridoxine/pyridoxamine 5'-phosphate oxidase (217 aa).

Residues 13 to 16 (RREY) and K71 each bind substrate. FMN contacts are provided by residues 66-71 (RIVLLK), 81-82 (YT), R87, K88, and Q110. Substrate is bound by residues Y128, R132, and S136. Residues 145–146 (QS) and W190 contribute to the FMN site. Position 196-198 (196-198 (RLH)) interacts with substrate. R200 is an FMN binding site.

It belongs to the pyridoxamine 5'-phosphate oxidase family. In terms of assembly, homodimer. Requires FMN as cofactor.

It carries out the reaction pyridoxamine 5'-phosphate + O2 + H2O = pyridoxal 5'-phosphate + H2O2 + NH4(+). It catalyses the reaction pyridoxine 5'-phosphate + O2 = pyridoxal 5'-phosphate + H2O2. The protein operates within cofactor metabolism; pyridoxal 5'-phosphate salvage; pyridoxal 5'-phosphate from pyridoxamine 5'-phosphate: step 1/1. It functions in the pathway cofactor metabolism; pyridoxal 5'-phosphate salvage; pyridoxal 5'-phosphate from pyridoxine 5'-phosphate: step 1/1. Its function is as follows. Catalyzes the oxidation of either pyridoxine 5'-phosphate (PNP) or pyridoxamine 5'-phosphate (PMP) into pyridoxal 5'-phosphate (PLP). This Yersinia pestis bv. Antiqua (strain Antiqua) protein is Pyridoxine/pyridoxamine 5'-phosphate oxidase.